The primary structure comprises 167 residues: NAD(P)H-quinone oxidoreductase subunit J (167 aa).

Belongs to the complex I 30 kDa subunit family. In terms of assembly, NDH-1 can be composed of about 15 different subunits; different subcomplexes with different compositions have been identified which probably have different functions.

It is found in the cellular thylakoid membrane. The catalysed reaction is a plastoquinone + NADH + (n+1) H(+)(in) = a plastoquinol + NAD(+) + n H(+)(out). It carries out the reaction a plastoquinone + NADPH + (n+1) H(+)(in) = a plastoquinol + NADP(+) + n H(+)(out). Its function is as follows. NDH-1 shuttles electrons from an unknown electron donor, via FMN and iron-sulfur (Fe-S) centers, to quinones in the respiratory and/or the photosynthetic chain. The immediate electron acceptor for the enzyme in this species is believed to be plastoquinone. Couples the redox reaction to proton translocation, and thus conserves the redox energy in a proton gradient. Cyanobacterial NDH-1 also plays a role in inorganic carbon-concentration. The sequence is that of NAD(P)H-quinone oxidoreductase subunit J from Microcystis aeruginosa (strain NIES-843 / IAM M-2473).